The primary structure comprises 393 residues: UDP-glucose 6-dehydrogenase (393 aa).

6 residues coordinate NAD(+): V11, D31, K36, T85, T120, and E147. Substrate is bound by residues 143–147 (EFLRE), K199, N203, 244–248 (YNNPS), and G252. Residue Y254 participates in NAD(+) binding. C255 functions as the Nucleophile in the catalytic mechanism. Position 258 (K258) interacts with NAD(+). Residue K309 coordinates substrate. Residue R316 coordinates NAD(+).

Belongs to the UDP-glucose/GDP-mannose dehydrogenase family. In terms of assembly, homodimer.

The enzyme catalyses UDP-alpha-D-glucose + 2 NAD(+) + H2O = UDP-alpha-D-glucuronate + 2 NADH + 3 H(+). Its pathway is nucleotide-sugar biosynthesis; UDP-alpha-D-glucuronate biosynthesis; UDP-alpha-D-glucuronate from UDP-alpha-D-glucose: step 1/1. It participates in capsule biogenesis; capsule polysaccharide biosynthesis. Functionally, catalyzes the formation of UDP-glucuronic acid which is required for capsular polysaccharide synthesis. Does not catalyze the formation of glucuronamide moiety of the capsular polysaccharide. This Campylobacter jejuni subsp. jejuni serotype O:2 (strain ATCC 700819 / NCTC 11168) protein is UDP-glucose 6-dehydrogenase.